We begin with the raw amino-acid sequence, 409 residues long: Transcription termination factor 3, mitochondrial (409 aa).

The transit peptide at 1–64 directs the protein to the mitochondrion; sequence MALLAQQLSR…KTDRALFSWS (64 aa). Residues 74 to 93 form a disordered region; the sequence is RKSSTNSTLLPSVSEQPEKI.

The protein belongs to the mTERF family.

The protein resides in the mitochondrion. Functionally, binds promoter DNA and regulates initiation of transcription. Required for normal mitochondrial transcription and translation, and for normal assembly of mitochondrial respiratory complexes. Required for normal mitochondrial function. Maintains 16S rRNA levels and functions in mitochondrial ribosome assembly by regulating the biogenesis of the 39S ribosomal subunit. The sequence is that of Transcription termination factor 3, mitochondrial (Mterf3) from Rattus norvegicus (Rat).